A 138-amino-acid chain; its full sequence is Putative membrane protein ORF6 (138 aa).

Helical transmembrane passes span 4–20 and 37–53; these read LTII…HAVL and VVVL…LMTI.

Its subcellular location is the membrane. This Ictalurid herpesvirus 1 (strain Auburn) (IcHV-1) protein is Putative membrane protein ORF6 (ORF6).